The primary structure comprises 168 residues: Protein-export protein SecB (168 aa).

Residues 1-21 (MADQPSGNNDAKQAETNGNTV) form a disordered region.

The protein belongs to the SecB family. In terms of assembly, homotetramer, a dimer of dimers. One homotetramer interacts with 1 SecA dimer.

The protein localises to the cytoplasm. One of the proteins required for the normal export of preproteins out of the cell cytoplasm. It is a molecular chaperone that binds to a subset of precursor proteins, maintaining them in a translocation-competent state. It also specifically binds to its receptor SecA. The sequence is that of Protein-export protein SecB from Chelativorans sp. (strain BNC1).